Here is a 152-residue protein sequence, read N- to C-terminus: Cytochrome c oxidase subunit 5A, mitochondrial (152 aa).

The N-terminal 43 residues, 1 to 43 (MLGTALRRCAVAAAAASRAGPRGLLHPAPAPGPAAAIQSIRCY), are a transit peptide targeting the mitochondrion. The short motif at 2–22 (LGTALRRCAVAAAAASRAGPR) is the SIFI-degron element. 2 positions are modified to N6-acetyllysine: lysine 89 and lysine 115. Threonine 143 bears the Phosphothreonine mark.

Belongs to the cytochrome c oxidase subunit 5A family. As to quaternary structure, component of the cytochrome c oxidase (complex IV, CIV), a multisubunit enzyme composed of 14 subunits. The complex is composed of a catalytic core of 3 subunits MT-CO1, MT-CO2 and MT-CO3, encoded in the mitochondrial DNA, and 11 supernumerary subunits COX4I, COX5A, COX5B, COX6A, COX6B, COX6C, COX7A, COX7B, COX7C, COX8 and NDUFA4, which are encoded in the nuclear genome. The complex exists as a monomer or a dimer and forms supercomplexes (SCs) in the inner mitochondrial membrane with NADH-ubiquinone oxidoreductase (complex I, CI) and ubiquinol-cytochrome c oxidoreductase (cytochrome b-c1 complex, complex III, CIII), resulting in different assemblies (supercomplex SCI(1)III(2)IV(1) and megacomplex MCI(2)III(2)IV(2)). Interacts with AFG1L. Interacts with RAB5IF. In terms of processing, in response to mitochondrial stress, the precursor protein is ubiquitinated by the SIFI complex in the cytoplasm before mitochondrial import, leading to its degradation. Within the SIFI complex, UBR4 initiates ubiquitin chain that are further elongated or branched by KCMF1.

Its subcellular location is the mitochondrion inner membrane. It participates in energy metabolism; oxidative phosphorylation. Functionally, component of the cytochrome c oxidase, the last enzyme in the mitochondrial electron transport chain which drives oxidative phosphorylation. The respiratory chain contains 3 multisubunit complexes succinate dehydrogenase (complex II, CII), ubiquinol-cytochrome c oxidoreductase (cytochrome b-c1 complex, complex III, CIII) and cytochrome c oxidase (complex IV, CIV), that cooperate to transfer electrons derived from NADH and succinate to molecular oxygen, creating an electrochemical gradient over the inner membrane that drives transmembrane transport and the ATP synthase. Cytochrome c oxidase is the component of the respiratory chain that catalyzes the reduction of oxygen to water. Electrons originating from reduced cytochrome c in the intermembrane space (IMS) are transferred via the dinuclear copper A center (CU(A)) of subunit 2 and heme A of subunit 1 to the active site in subunit 1, a binuclear center (BNC) formed by heme A3 and copper B (CU(B)). The BNC reduces molecular oxygen to 2 water molecules using 4 electrons from cytochrome c in the IMS and 4 protons from the mitochondrial matrix. In Eulemur fulvus fulvus (Brown lemur), this protein is Cytochrome c oxidase subunit 5A, mitochondrial (COX5A).